A 321-amino-acid polypeptide reads, in one-letter code: Anthranilate phosphoribosyltransferase (321 aa).

5-phospho-alpha-D-ribose 1-diphosphate is bound by residues glycine 72, glycine 75–aspartate 76, threonine 80, asparagine 82–threonine 85, lysine 99–serine 107, and serine 111. Glycine 72 is a binding site for anthranilate. Serine 84 provides a ligand contact to Mg(2+). Asparagine 102 is a binding site for anthranilate. An anthranilate-binding site is contributed by arginine 157. Mg(2+) contacts are provided by aspartate 216 and glutamate 217.

It belongs to the anthranilate phosphoribosyltransferase family. In terms of assembly, homodimer. It depends on Mg(2+) as a cofactor.

The enzyme catalyses N-(5-phospho-beta-D-ribosyl)anthranilate + diphosphate = 5-phospho-alpha-D-ribose 1-diphosphate + anthranilate. Its pathway is amino-acid biosynthesis; L-tryptophan biosynthesis; L-tryptophan from chorismate: step 2/5. Its function is as follows. Catalyzes the transfer of the phosphoribosyl group of 5-phosphorylribose-1-pyrophosphate (PRPP) to anthranilate to yield N-(5'-phosphoribosyl)-anthranilate (PRA). This chain is Anthranilate phosphoribosyltransferase, found in Methanococcus maripaludis (strain C7 / ATCC BAA-1331).